The following is a 206-amino-acid chain: ATP phosphoribosyltransferase (206 aa).

Belongs to the ATP phosphoribosyltransferase family. Short subfamily. As to quaternary structure, heteromultimer composed of HisG and HisZ subunits.

The protein localises to the cytoplasm. The catalysed reaction is 1-(5-phospho-beta-D-ribosyl)-ATP + diphosphate = 5-phospho-alpha-D-ribose 1-diphosphate + ATP. It participates in amino-acid biosynthesis; L-histidine biosynthesis; L-histidine from 5-phospho-alpha-D-ribose 1-diphosphate: step 1/9. Its function is as follows. Catalyzes the condensation of ATP and 5-phosphoribose 1-diphosphate to form N'-(5'-phosphoribosyl)-ATP (PR-ATP). Has a crucial role in the pathway because the rate of histidine biosynthesis seems to be controlled primarily by regulation of HisG enzymatic activity. In Leptospira interrogans serogroup Icterohaemorrhagiae serovar copenhageni (strain Fiocruz L1-130), this protein is ATP phosphoribosyltransferase.